Here is a 265-residue protein sequence, read N- to C-terminus: Cell division protein DivIB (265 aa).

The Cytoplasmic portion of the chain corresponds to 1-33 (MRMELKMMGNVNKSNKTNEYILRRHKKKRKKKL). Residues 34 to 54 (IIFSILLISILVTLCFKHPFF) form a helical membrane-spanning segment. A POTRA domain is found at 54-122 (FNVKIVEVKD…NKIVIHIKER (69 aa)). Over 55-265 (NVKIVEVKDN…FKGNPVVFIK (211 aa)) the chain is Extracellular.

This sequence belongs to the FtsQ/DivIB family. DivIB subfamily.

The protein resides in the cell membrane. Cell division protein that may be involved in stabilizing or promoting the assembly of the division complex. The sequence is that of Cell division protein DivIB from Clostridium tetani (strain Massachusetts / E88).